The following is a 387-amino-acid chain: 3-ketoacyl-CoA thiolase (387 aa).

The active-site Acyl-thioester intermediate is C91. Catalysis depends on proton acceptor residues H343 and C373.

The protein belongs to the thiolase-like superfamily. Thiolase family. Heterotetramer of two alpha chains (FadB) and two beta chains (FadA).

It localises to the cytoplasm. The enzyme catalyses an acyl-CoA + acetyl-CoA = a 3-oxoacyl-CoA + CoA. Its pathway is lipid metabolism; fatty acid beta-oxidation. In terms of biological role, catalyzes the final step of fatty acid oxidation in which acetyl-CoA is released and the CoA ester of a fatty acid two carbons shorter is formed. This chain is 3-ketoacyl-CoA thiolase, found in Shewanella sp. (strain MR-4).